We begin with the raw amino-acid sequence, 273 residues long: Ribosomal protein L11 methyltransferase (273 aa).

S-adenosyl-L-methionine is bound by residues T112, G133, D155, and N203.

This sequence belongs to the methyltransferase superfamily. PrmA family.

It is found in the cytoplasm. The catalysed reaction is L-lysyl-[protein] + 3 S-adenosyl-L-methionine = N(6),N(6),N(6)-trimethyl-L-lysyl-[protein] + 3 S-adenosyl-L-homocysteine + 3 H(+). In terms of biological role, methylates ribosomal protein L11. The sequence is that of Ribosomal protein L11 methyltransferase from Deinococcus radiodurans (strain ATCC 13939 / DSM 20539 / JCM 16871 / CCUG 27074 / LMG 4051 / NBRC 15346 / NCIMB 9279 / VKM B-1422 / R1).